We begin with the raw amino-acid sequence, 294 residues long: Bifunctional protein FolD (294 aa).

NADP(+) contacts are provided by residues 171–173 (GRS), Ser196, and Ile237.

It belongs to the tetrahydrofolate dehydrogenase/cyclohydrolase family. As to quaternary structure, homodimer.

It catalyses the reaction (6R)-5,10-methylene-5,6,7,8-tetrahydrofolate + NADP(+) = (6R)-5,10-methenyltetrahydrofolate + NADPH. It carries out the reaction (6R)-5,10-methenyltetrahydrofolate + H2O = (6R)-10-formyltetrahydrofolate + H(+). It functions in the pathway one-carbon metabolism; tetrahydrofolate interconversion. Its function is as follows. Catalyzes the oxidation of 5,10-methylenetetrahydrofolate to 5,10-methenyltetrahydrofolate and then the hydrolysis of 5,10-methenyltetrahydrofolate to 10-formyltetrahydrofolate. The sequence is that of Bifunctional protein FolD from Synechocystis sp. (strain ATCC 27184 / PCC 6803 / Kazusa).